An 82-amino-acid chain; its full sequence is RNA-binding protein Hfq (82 aa).

A Sm domain is found at 10 to 70 (DAFLNQVRKD…ISTVAPLRPI (61 aa)).

This sequence belongs to the Hfq family. As to quaternary structure, homohexamer.

RNA chaperone that binds small regulatory RNA (sRNAs) and mRNAs to facilitate mRNA translational regulation in response to envelope stress, environmental stress and changes in metabolite concentrations. Also binds with high specificity to tRNAs. The protein is RNA-binding protein Hfq of Syntrophomonas wolfei subsp. wolfei (strain DSM 2245B / Goettingen).